The primary structure comprises 43 residues: Protein PsbN (43 aa).

A helical membrane pass occupies residues 5–27 (TLIAIFISCSLVSFTGYALYTAF).

This sequence belongs to the PsbN family.

It is found in the plastid. Its subcellular location is the chloroplast thylakoid membrane. Its function is as follows. May play a role in photosystem I and II biogenesis. This chain is Protein PsbN, found in Lopidium concinnum (Moss).